Reading from the N-terminus, the 194-residue chain is Imidazoleglycerol-phosphate dehydratase (194 aa).

The protein belongs to the imidazoleglycerol-phosphate dehydratase family.

It localises to the cytoplasm. It catalyses the reaction D-erythro-1-(imidazol-4-yl)glycerol 3-phosphate = 3-(imidazol-4-yl)-2-oxopropyl phosphate + H2O. It functions in the pathway amino-acid biosynthesis; L-histidine biosynthesis; L-histidine from 5-phospho-alpha-D-ribose 1-diphosphate: step 6/9. The protein is Imidazoleglycerol-phosphate dehydratase of Thermus thermophilus (strain ATCC 27634 / DSM 579 / HB8).